The following is a 651-amino-acid chain: Histone-arginine methyltransferase CARM1 (651 aa).

The interaction with C9orf72 stretch occupies residues 28-139; it reads ATVSVFPGAR…GHTLERSVFS (112 aa). The SAM-dependent MTase PRMT-type domain occupies 147–454; sequence AVQYFQFYGY…KRQSYDISIV (308 aa). S-adenosyl-L-methionine is bound by residues Q160, R169, G193, and E215. S217 bears the Phosphoserine mark. Residue K228 forms a Glycyl lysine isopeptide (Lys-Gly) (interchain with G-Cter in ubiquitin) linkage. The S-adenosyl-L-methionine site is built by E244 and S272. The segment at 347-380 is required for nuclear translocation; that stretch reads RILMAKSVKYTVNFLEAKEGDLHRIEIPFKFHML. Residues 500 to 651 form a transactivation domain region; the sequence is TGSTYNLSSG…IPTNTMHYGS (152 aa). R551 bears the Dimethylated arginine mark. Residues 581–617 form a disordered region; sequence RSSYQWGPGRLRGHAGSSVPMTCPTGSSGAQGGGGSS.

It belongs to the class I-like SAM-binding methyltransferase superfamily. Protein arginine N-methyltransferase family. Homodimer. Interacts with NR1H4. Interacts with SNRPC. Interacts with the C-terminus of NCOA2/GRIP1, NCO3/ACTR and NCOA1/SRC1. Part of a complex consisting of CARM1, EP300/P300 and NCOA2/GRIP1. Interacts with FLII, TP53, myogenic factor MEF2, EP300/P300, TRIM24, CREBBP and CTNNB1. Interacts with RELA. Identified in a complex containing CARM1, TRIM24 and NCOA2/GRIP1. Interacts with NCOA3/SRC3. Interacts with SKP2. Interacts (via PH domain-like fold) with C9orf72. Interacts with PARP1; promoting PARP1 recruimtent to replication forks. In terms of processing, auto-methylated on Arg-551. Methylation enhances transcription coactivator activity. Methylation is required for its role in the regulation of pre-mRNA alternative splicing. Phosphorylation at Ser-217 interferes with S-adenosyl-L-methionine binding and strongly reduces methyltransferase activity. Phosphorylation at Ser-217 is strongly increased during mitosis, and decreases rapidly to a very low, basal level after entry into the G1 phase of the cell cycle. Phosphorylation at Ser-217 may promote location in the cytosol. Post-translationally, ubiquitinated by E3 ubiquitin-protein ligase complex containing FBXO9 at Lys-228; leading to proteasomal degradation. Isoform 1 is expressed at low levels in brain, liver and testis. As to expression, isoform 2 is highly expressed in brain, liver, skeletal muscle and testis. In terms of tissue distribution, isoform 3 is highly expressed in spleen, liver and kidney. Isoform 4 is expressed in spleen, liver and kidney.

It localises to the nucleus. Its subcellular location is the cytoplasm. The protein localises to the chromosome. The catalysed reaction is L-arginyl-[protein] + 2 S-adenosyl-L-methionine = N(omega),N(omega)-dimethyl-L-arginyl-[protein] + 2 S-adenosyl-L-homocysteine + 2 H(+). Methylation of H3R17 (H3R17me) by CARM1 is stimulated by preacetylation of H3 'Lys-18' (H3K18ac) H3 'Lys-23' (H3K23ac) by EP300 and blocked by citrullination of H3 'Arg-17' (H3R17ci) by PADI4. Functionally, methylates (mono- and asymmetric dimethylation) the guanidino nitrogens of arginyl residues in several proteins involved in DNA packaging, transcription regulation, pre-mRNA splicing, and mRNA stability. Recruited to promoters upon gene activation together with histone acetyltransferases from EP300/P300 and p160 families, methylates histone H3 at 'Arg-17' (H3R17me), forming mainly asymmetric dimethylarginine (H3R17me2a), leading to activation of transcription via chromatin remodeling. During nuclear hormone receptor activation and TCF7L2/TCF4 activation, acts synergically with EP300/P300 and either one of the p160 histone acetyltransferases NCOA1/SRC1, NCOA2/GRIP1 and NCOA3/ACTR or CTNNB1/beta-catenin to activate transcription. During myogenic transcriptional activation, acts together with NCOA3/ACTR as a coactivator for MEF2C. During monocyte inflammatory stimulation, acts together with EP300/P300 as a coactivator for NF-kappa-B. Acts as a coactivator for PPARG, promotes adipocyte differentiation and the accumulation of brown fat tissue. Plays a role in the regulation of pre-mRNA alternative splicing by methylation of splicing factors. Also seems to be involved in p53/TP53 transcriptional activation. Methylates EP300/P300, both at 'Arg-2142', which may loosen its interaction with NCOA2/GRIP1, and at 'Arg-580' and 'Arg-604' in the KIX domain, which impairs its interaction with CREB and inhibits CREB-dependent transcriptional activation. Also methylates arginine residues in RNA-binding proteins PABPC1, ELAVL1 and ELAV4, which may affect their mRNA-stabilizing properties and the half-life of their target mRNAs. Acts as a transcriptional coactivator of ACACA/acetyl-CoA carboxylase by enriching H3R17 methylation at its promoter, thereby positively regulating fatty acid synthesis. Independently of its methyltransferase activity, involved in replication fork progression: promotes PARP1 recruitment to replication forks, leading to poly-ADP-ribosylation of chromatin at replication forks and reduced fork speed. In terms of biological role, isoform 3 specifically affects pre-mRNA splicing. This activity is independent from methyltransferase activity. The protein is Histone-arginine methyltransferase CARM1 (Carm1) of Rattus norvegicus (Rat).